The primary structure comprises 195 residues: Putative NADH dehydrogenase/NAD(P)H nitroreductase CC_0061 (195 aa).

It belongs to the nitroreductase family. HadB/RutE subfamily. It depends on FMN as a cofactor.

This is Putative NADH dehydrogenase/NAD(P)H nitroreductase CC_0061 from Caulobacter vibrioides (strain ATCC 19089 / CIP 103742 / CB 15) (Caulobacter crescentus).